An 892-amino-acid chain; its full sequence is Alanine--tRNA ligase (892 aa).

Positions 596, 600, 700, and 704 each coordinate Zn(2+).

It belongs to the class-II aminoacyl-tRNA synthetase family. Zn(2+) serves as cofactor.

Its subcellular location is the cytoplasm. It catalyses the reaction tRNA(Ala) + L-alanine + ATP = L-alanyl-tRNA(Ala) + AMP + diphosphate. Functionally, catalyzes the attachment of alanine to tRNA(Ala) in a two-step reaction: alanine is first activated by ATP to form Ala-AMP and then transferred to the acceptor end of tRNA(Ala). Also edits incorrectly charged Ser-tRNA(Ala) and Gly-tRNA(Ala) via its editing domain. The polypeptide is Alanine--tRNA ligase (Methanococcus maripaludis (strain C5 / ATCC BAA-1333)).